Consider the following 420-residue polypeptide: UDP-glucuronic acid decarboxylase 1 (420 aa).

The residue at position 1 (methionine 1) is an N-acetylmethionine. Residues methionine 1–lysine 19 are Cytoplasmic-facing. The chain crosses the membrane as a helical; Signal-anchor for type II membrane protein span at residues leucine 20–methionine 40. Over arginine 41 to serine 420 the chain is Lumenal. Residue threonine 94 is modified to Phosphothreonine. 10 residues coordinate NAD(+): glycine 98, phenylalanine 99, valine 100, aspartate 119, asparagine 120, phenylalanine 122, threonine 123, glycine 124, aspartate 144, and valine 145. The UDP-alpha-D-glucuronate site is built by leucine 149 and tyrosine 150. NAD(+) contacts are provided by leucine 159 and serine 161. Position 177 (lysine 177) interacts with UDP-alpha-D-glucuronate. Position 178 (threonine 178) interacts with NAD(+). Residues asparagine 185, glycine 188, lysine 191, and arginine 192 each coordinate UDP-alpha-D-glucuronate. NAD(+) is bound by residues alanine 200, tyrosine 231, and lysine 235. Catalysis depends on tyrosine 231, which acts as the Proton acceptor. UDP-alpha-D-glucuronate-binding residues include tyrosine 245, glutamine 248, and glutamate 249. NAD(+) is bound by residues threonine 261, histidine 267, and arginine 272. Asparagine 316 carries N-linked (GlcNAc...) asparagine glycosylation.

It belongs to the NAD(P)-dependent epimerase/dehydratase family. UDP-glucuronic acid decarboxylase subfamily. Homodimer and homotetramer. Interacts with AKT1. Requires NAD(+) as cofactor. As to expression, ubiquitous. Detected in heart, brain, spleen, lung, testis, liver, skeletal muscle and kidney.

The protein resides in the golgi apparatus. Its subcellular location is the golgi stack membrane. The enzyme catalyses UDP-alpha-D-glucuronate + H(+) = UDP-alpha-D-xylose + CO2. It participates in nucleotide-sugar biosynthesis; UDP-alpha-D-xylose biosynthesis; UDP-alpha-D-xylose from UDP-alpha-D-glucuronate: step 1/1. Catalyzes the NAD-dependent decarboxylation of UDP-glucuronic acid to UDP-xylose. Necessary for the biosynthesis of the core tetrasaccharide in glycosaminoglycan biosynthesis. In Rattus norvegicus (Rat), this protein is UDP-glucuronic acid decarboxylase 1.